The chain runs to 213 residues: ATP phosphoribosyltransferase (213 aa).

It belongs to the ATP phosphoribosyltransferase family. Short subfamily. As to quaternary structure, heteromultimer composed of HisG and HisZ subunits.

The protein resides in the cytoplasm. The catalysed reaction is 1-(5-phospho-beta-D-ribosyl)-ATP + diphosphate = 5-phospho-alpha-D-ribose 1-diphosphate + ATP. The protein operates within amino-acid biosynthesis; L-histidine biosynthesis; L-histidine from 5-phospho-alpha-D-ribose 1-diphosphate: step 1/9. Its function is as follows. Catalyzes the condensation of ATP and 5-phosphoribose 1-diphosphate to form N'-(5'-phosphoribosyl)-ATP (PR-ATP). Has a crucial role in the pathway because the rate of histidine biosynthesis seems to be controlled primarily by regulation of HisG enzymatic activity. The protein is ATP phosphoribosyltransferase of Shouchella clausii (strain KSM-K16) (Alkalihalobacillus clausii).